The sequence spans 630 residues: Molybdenum cofactor biosynthesis protein 1 (630 aa).

One can recognise a Radical SAM core domain in the interval 61 to 298 (RFNRHHTYLR…SKTYHVPGFK (238 aa)). A GTP-binding site is contributed by R70. C77 and C81 together coordinate [4Fe-4S] cluster. S-adenosyl-L-methionine is bound at residue Y83. C84 contributes to the [4Fe-4S] cluster binding site. GTP is bound at residue R120. G124 is a binding site for S-adenosyl-L-methionine. T151 contacts GTP. Residue S175 participates in S-adenosyl-L-methionine binding. K212 is a GTP binding site. M246 lines the S-adenosyl-L-methionine pocket. The [4Fe-4S] cluster site is built by C312 and C315. 317 to 319 (RLR) is a GTP binding site. C329 provides a ligand contact to [4Fe-4S] cluster. The segment at 402-629 (KEVKNYLLKL…GGKSSSPQIT (228 aa)) is molybdenum cofactor biosynthesis protein C. D599 (for molybdenum cofactor biosynthesis protein C activity) is an active-site residue.

It in the C-terminal section; belongs to the MoaC family. The protein in the N-terminal section; belongs to the radical SAM superfamily. MoaA family. As to quaternary structure, isoform mocs1a and isoform mocs1b probably form a heterooligomer. [4Fe-4S] cluster serves as cofactor.

The catalysed reaction is GTP + AH2 + S-adenosyl-L-methionine = (8S)-3',8-cyclo-7,8-dihydroguanosine 5'-triphosphate + 5'-deoxyadenosine + L-methionine + A + H(+). The enzyme catalyses (8S)-3',8-cyclo-7,8-dihydroguanosine 5'-triphosphate = cyclic pyranopterin phosphate + diphosphate. It functions in the pathway cofactor biosynthesis; molybdopterin biosynthesis. In terms of biological role, isoform mocs1a and isoform mocs1b probably form a complex that catalyzes the conversion of 5'-GTP to cyclic pyranopterin monophosphate (cPMP). mocs1a catalyzes the cyclization of GTP to (8S)-3',8-cyclo-7,8-dihydroguanosine 5'-triphosphate and mocs1b catalyzes the subsequent conversion of (8S)-3',8-cyclo-7,8-dihydroguanosine 5'-triphosphate to cPMP. In Dictyostelium discoideum (Social amoeba), this protein is Molybdenum cofactor biosynthesis protein 1 (mocs1).